The following is a 420-amino-acid chain: CinA-like protein (420 aa).

Belongs to the CinA family.

This chain is CinA-like protein, found in Syntrophus aciditrophicus (strain SB).